The primary structure comprises 265 residues: 3-methyl-2-oxobutanoate hydroxymethyltransferase (265 aa).

D41 and D80 together coordinate Mg(2+). 3-methyl-2-oxobutanoate is bound by residues 41–42 (DS), D80, and K110. E112 is a Mg(2+) binding site. Catalysis depends on E179, which acts as the Proton acceptor.

Belongs to the PanB family. Homodecamer; pentamer of dimers. The cofactor is Mg(2+).

The protein resides in the cytoplasm. The catalysed reaction is 3-methyl-2-oxobutanoate + (6R)-5,10-methylene-5,6,7,8-tetrahydrofolate + H2O = 2-dehydropantoate + (6S)-5,6,7,8-tetrahydrofolate. It functions in the pathway cofactor biosynthesis; (R)-pantothenate biosynthesis; (R)-pantoate from 3-methyl-2-oxobutanoate: step 1/2. Its function is as follows. Catalyzes the reversible reaction in which hydroxymethyl group from 5,10-methylenetetrahydrofolate is transferred onto alpha-ketoisovalerate to form ketopantoate. The polypeptide is 3-methyl-2-oxobutanoate hydroxymethyltransferase (Pseudothermotoga lettingae (strain ATCC BAA-301 / DSM 14385 / NBRC 107922 / TMO) (Thermotoga lettingae)).